Reading from the N-terminus, the 207-residue chain is Guanylate kinase (207 aa).

Positions 5–184 (GNLFIVSAPS…ALADLVAIIR (180 aa)) constitute a Guanylate kinase-like domain. 12–19 (APSGAGKS) is an ATP binding site.

It belongs to the guanylate kinase family.

The protein resides in the cytoplasm. It catalyses the reaction GMP + ATP = GDP + ADP. In terms of biological role, essential for recycling GMP and indirectly, cGMP. The chain is Guanylate kinase from Shewanella violacea (strain JCM 10179 / CIP 106290 / LMG 19151 / DSS12).